Here is a 464-residue protein sequence, read N- to C-terminus: Serine/threonine-protein kinase 38-like (464 aa).

N-acetylalanine is present on Ala2. The S100B binding stretch occupies residues 64–89 (KLRRSQHARKETEFLRLKRTRLGLDD). Thr75 carries the phosphothreonine modification. Positions 90 to 383 (FESLKVIGRG…VEEIKGHPFF (294 aa)) constitute a Protein kinase domain. ATP contacts are provided by residues 96 to 104 (IGRGAFGEV) and Lys119. Asp213 serves as the catalytic Proton acceptor. Phosphoserine; by autocatalysis is present on Ser282. The AGC-kinase C-terminal domain maps to 384–453 (EGVDWGHIRE…KRFEGLTQRG (70 aa)). Thr442 carries the post-translational modification Phosphothreonine; by STK24/MST3.

It belongs to the protein kinase superfamily. AGC Ser/Thr protein kinase family. In terms of assembly, homodimeric S100B binds two molecules of STK38L. Interacts with MOB1 and MOB2. Interacts with MICAL1; leading to inhibit the protein kinase activity by antagonizing activation by MST1/STK4. Requires Mg(2+) as cofactor. Highly expressed in the large and small intestine, stomach and testis. High levels also present in the brain, in particular the neurocortex, basal forebrain, hippocampus, the amygdala, cerebellum and brainstem.

The protein localises to the cytoplasm. The protein resides in the cytoskeleton. It localises to the membrane. The catalysed reaction is L-seryl-[protein] + ATP = O-phospho-L-seryl-[protein] + ADP + H(+). The enzyme catalyses L-threonyl-[protein] + ATP = O-phospho-L-threonyl-[protein] + ADP + H(+). With respect to regulation, activated by binding of S100B which releases autoinhibitory N-lobe interactions, enabling ATP to bind and the autophosphorylation of Ser-282. Thr-442 then undergoes calcium-dependent phosphorylation by STK24/MST3. Interactions between phosphorylated Thr-442 and the N-lobe promote additional structural changes that complete the activation of the kinase. Autoinhibition is also released by the binding of MOB1/MOBKL1A and MOB2 to the N-terminal of STK38L. Functionally, involved in the regulation of structural processes in differentiating and mature neuronal cells. The sequence is that of Serine/threonine-protein kinase 38-like from Mus musculus (Mouse).